A 339-amino-acid chain; its full sequence is Aspartate carbamoyltransferase catalytic subunit (339 aa).

2 residues coordinate carbamoyl phosphate: arginine 59 and threonine 60. Lysine 87 serves as a coordination point for L-aspartate. Positions 109, 142, and 145 each coordinate carbamoyl phosphate. Residues arginine 182 and arginine 253 each coordinate L-aspartate. Glycine 294 and proline 295 together coordinate carbamoyl phosphate.

It belongs to the aspartate/ornithine carbamoyltransferase superfamily. ATCase family. In terms of assembly, heterododecamer (2C3:3R2) of six catalytic PyrB chains organized as two trimers (C3), and six regulatory PyrI chains organized as three dimers (R2).

It catalyses the reaction carbamoyl phosphate + L-aspartate = N-carbamoyl-L-aspartate + phosphate + H(+). It functions in the pathway pyrimidine metabolism; UMP biosynthesis via de novo pathway; (S)-dihydroorotate from bicarbonate: step 2/3. Catalyzes the condensation of carbamoyl phosphate and aspartate to form carbamoyl aspartate and inorganic phosphate, the committed step in the de novo pyrimidine nucleotide biosynthesis pathway. This is Aspartate carbamoyltransferase catalytic subunit from Prochlorococcus marinus (strain NATL2A).